The sequence spans 673 residues: Pesticin receptor (673 aa).

Residues 1–22 (MKMTRLYPLALGGLLLPAIANA) form the signal peptide. The TonB box signature appears at 30-37 (STLEVTAS). The 115-residue stretch at 41 to 155 (SRSASANNVS…QGGIINIVTQ (115 aa)) folds into the TBDR plug domain. One can recognise a TBDR beta-barrel domain in the interval 160 to 672 (TPRGYIEGGV…TVGINTRIDF (513 aa)). Residues 657-673 (QVNMGRTVGINTRIDFF) carry the TonB C-terminal box motif.

The protein belongs to the TonB-dependent receptor family.

It is found in the cell outer membrane. Its function is as follows. Receptor for the bacteriocin pesticin and for the siderophore yersiniabactin. This is Pesticin receptor (fyuA) from Yersinia enterocolitica.